The following is a 239-amino-acid chain: Derlin-2 (239 aa).

The Cytoplasmic segment spans residues 1–56; it reads MAYQSLRLEYLQIPPVSRAYTTACVLTTAAVQLELITPFQLYFNPELIFKHFQIWR. The helical transmembrane segment at 57–77 threads the bilayer; the sequence is LITNFLFFGPVGFNFLFNMIF. At 78–98 the chain is on the lumenal side; the sequence is LYRYCRMLEEGSFRGRTADFV. Residues 99 to 119 traverse the membrane as a helical segment; it reads FMFLFGGFLMTLFGLFVSLVF. Residues 120 to 150 are Cytoplasmic-facing; that stretch reads LGQAFTIMLVYVWSRRNPYVRMNFFGLLNFQ. Residues 151 to 171 form a helical membrane-spanning segment; the sequence is APFLPWVLMGFSLLLGNSIIV. A topological domain (lumenal) is located at residue Asp-172. Residues 173-193 form a helical membrane-spanning segment; that stretch reads LLGIAVGHIYFFLEDVFPNQP. Residues 194–239 lie on the Cytoplasmic side of the membrane; the sequence is GGIRILKTPSILKAIFDTPDEDPNYNPLPEERPGGFAWGEGQRLGG. Residues 215-239 are disordered; that stretch reads DPNYNPLPEERPGGFAWGEGQRLGG. Residues 229 to 239 are compositionally biased toward gly residues; the sequence is FAWGEGQRLGG.

It belongs to the derlin family. Forms homo- and heterooligomers with DERL3 and, to a lesser extent, with DERL1. Interacts with the SEL1L/SYVN1 and VCP/SELENOS protein complexes. Mediates association between VCP and EDEM1, as well as that between VCP and the misfolded glycoproteins. Interacts with OS9. Interacts with SELENOK and SELENOS. Interacts with the signal recognition particle/SRP and the SRP receptor; in the process of endoplasmic reticulum stress-induced pre-emptive quality control. Interacts with CCDC47.

It is found in the endoplasmic reticulum membrane. Its function is as follows. Functional component of endoplasmic reticulum-associated degradation (ERAD) for misfolded lumenal glycoproteins, but not that of misfolded nonglycoproteins. May act by forming a channel that allows the retrotranslocation of misfolded glycoproteins into the cytosol where they are ubiquitinated and degraded by the proteasome. May mediate the interaction between VCP and misfolded glycoproteins. May also be involved in endoplasmic reticulum stress-induced pre-emptive quality control, a mechanism that selectively attenuates the translocation of newly synthesized proteins into the endoplasmic reticulum and reroutes them to the cytosol for proteasomal degradation. This is Derlin-2 from Pongo abelii (Sumatran orangutan).